A 261-amino-acid polypeptide reads, in one-letter code: Cytochrome c oxidase subunit 3 (261 aa).

Over 1–15 (MTHQTHAYHMVNPSP) the chain is Mitochondrial matrix. A helical membrane pass occupies residues 16–34 (WPLTGALSALLMTSGLVMW). The Mitochondrial intermembrane segment spans residues 35–40 (FHYHST). The helical transmembrane segment at 41 to 66 (ILVLLGLLTNILTMYQWWRDVVREGT) threads the bilayer. The Mitochondrial matrix portion of the chain corresponds to 67–72 (FQGHHT). Residues 73-105 (PTVQKGLRYGMVLFIISEVFFFAGFFWAFYHSS) form a helical membrane-spanning segment. Over 106-128 (LAPTPELGGCWPPTGIHPLDPME) the chain is Mitochondrial intermembrane. Residues 129–152 (VPLLNTSVLLASGVTITWAHHSLM) form a helical membrane-spanning segment. Residues 153 to 155 (EGN) are Mitochondrial matrix-facing. Residues 156 to 183 (RKQMLQALFITISLGIYFTLLQASEYHE) traverse the membrane as a helical segment. The Mitochondrial intermembrane portion of the chain corresponds to 184–190 (ASFSISD). A helical transmembrane segment spans residues 191-223 (GIYGSTFFMATGFHGLHVIIGSTFLAVCFLRQL). Topologically, residues 224 to 232 (KFHFTSNHH) are mitochondrial matrix. The helical transmembrane segment at 233–256 (FGFEAAAWYWHFVDVVWLFLYVSI) threads the bilayer. Topologically, residues 257–261 (YWWGS) are mitochondrial intermembrane.

Belongs to the cytochrome c oxidase subunit 3 family. In terms of assembly, component of the cytochrome c oxidase (complex IV, CIV), a multisubunit enzyme composed of 14 subunits. The complex is composed of a catalytic core of 3 subunits MT-CO1, MT-CO2 and MT-CO3, encoded in the mitochondrial DNA, and 11 supernumerary subunits COX4I, COX5A, COX5B, COX6A, COX6B, COX6C, COX7A, COX7B, COX7C, COX8 and NDUFA4, which are encoded in the nuclear genome. The complex exists as a monomer or a dimer and forms supercomplexes (SCs) in the inner mitochondrial membrane with NADH-ubiquinone oxidoreductase (complex I, CI) and ubiquinol-cytochrome c oxidoreductase (cytochrome b-c1 complex, complex III, CIII), resulting in different assemblies (supercomplex SCI(1)III(2)IV(1) and megacomplex MCI(2)III(2)IV(2)).

It localises to the mitochondrion inner membrane. It catalyses the reaction 4 Fe(II)-[cytochrome c] + O2 + 8 H(+)(in) = 4 Fe(III)-[cytochrome c] + 2 H2O + 4 H(+)(out). In terms of biological role, component of the cytochrome c oxidase, the last enzyme in the mitochondrial electron transport chain which drives oxidative phosphorylation. The respiratory chain contains 3 multisubunit complexes succinate dehydrogenase (complex II, CII), ubiquinol-cytochrome c oxidoreductase (cytochrome b-c1 complex, complex III, CIII) and cytochrome c oxidase (complex IV, CIV), that cooperate to transfer electrons derived from NADH and succinate to molecular oxygen, creating an electrochemical gradient over the inner membrane that drives transmembrane transport and the ATP synthase. Cytochrome c oxidase is the component of the respiratory chain that catalyzes the reduction of oxygen to water. Electrons originating from reduced cytochrome c in the intermembrane space (IMS) are transferred via the dinuclear copper A center (CU(A)) of subunit 2 and heme A of subunit 1 to the active site in subunit 1, a binuclear center (BNC) formed by heme A3 and copper B (CU(B)). The BNC reduces molecular oxygen to 2 water molecules using 4 electrons from cytochrome c in the IMS and 4 protons from the mitochondrial matrix. In Dugong dugon (Dugong), this protein is Cytochrome c oxidase subunit 3 (MT-CO3).